We begin with the raw amino-acid sequence, 338 residues long: Cinnamoyl-CoA reductase 1 (338 aa).

NADP(+) contacts are provided by residues 22–28 (GAGGFIG), Arg47, Lys53, 73–74 (DV), 93–95 (VAS), Tyr165, Lys169, 192–195 (PSMT), and Ser207. Cys158 and Cys166 are disulfide-bonded. Lys169 (proton donor) is an active-site residue.

Belongs to the NAD(P)-dependent epimerase/dehydratase family. Dihydroflavonol-4-reductase subfamily. In terms of assembly, interacts with RAC1 in a GTP-dependent manner.

The protein localises to the cytoplasm. The enzyme catalyses (E)-cinnamaldehyde + NADP(+) + CoA = (E)-cinnamoyl-CoA + NADPH + H(+). The protein operates within aromatic compound metabolism; phenylpropanoid biosynthesis. Its activity is regulated as follows. Activated by the small GTPase RAC1. In terms of biological role, involved in the latter stages of lignin biosynthesis. Catalyzes one of the last steps of monolignol biosynthesis, the conversion of cinnamoyl-CoAs into their corresponding cinnamaldehydes. Probably involved in the formation of lignin in defense responses. The protein is Cinnamoyl-CoA reductase 1 of Oryza sativa subsp. japonica (Rice).